The following is a 166-amino-acid chain: Large ribosomal subunit protein uL10 (166 aa).

Belongs to the universal ribosomal protein uL10 family. As to quaternary structure, part of the ribosomal stalk of the 50S ribosomal subunit. The N-terminus interacts with L11 and the large rRNA to form the base of the stalk. The C-terminus forms an elongated spine to which L12 dimers bind in a sequential fashion forming a multimeric L10(L12)X complex.

In terms of biological role, forms part of the ribosomal stalk, playing a central role in the interaction of the ribosome with GTP-bound translation factors. The sequence is that of Large ribosomal subunit protein uL10 from Lysinibacillus sphaericus (strain C3-41).